We begin with the raw amino-acid sequence, 286 residues long: Probable ketoamine kinase YniA (286 aa).

91–93 (DYL) is an ATP binding site. Asp193 (proton acceptor) is an active-site residue.

Belongs to the fructosamine kinase family.

Its function is as follows. Ketoamine kinase that phosphorylates ketoamines on the third carbon of the sugar moiety to generate ketoamine 3-phosphate. Its precise substrate are unknown: does not have ribulosamine and/or erythrulosamine 3-kinase activity in vitro. This Escherichia coli (strain K12) protein is Probable ketoamine kinase YniA (yniA).